The sequence spans 551 residues: CTP synthase (551 aa).

The segment at 1 to 273 (MKNTTNTKRT…DSKILELLNI (273 aa)) is amidoligase domain. Residue serine 21 coordinates CTP. Serine 21 contacts UTP. ATP-binding positions include 22–27 (SLGKGL) and aspartate 79. Residues aspartate 79 and glutamate 147 each coordinate Mg(2+). Residues 154 to 156 (DIE), 194 to 199 (KTKPTQ), and lysine 230 contribute to the CTP site. UTP-binding positions include 194-199 (KTKPTQ) and lysine 230. Positions 298-551 (TIAITGKYVD…ISAAVANKKG (254 aa)) constitute a Glutamine amidotransferase type-1 domain. Glycine 360 provides a ligand contact to L-glutamine. The Nucleophile; for glutamine hydrolysis role is filled by cysteine 387. L-glutamine is bound by residues 388 to 391 (LGMQ), glutamate 411, and arginine 479. Active-site residues include histidine 524 and glutamate 526.

This sequence belongs to the CTP synthase family. As to quaternary structure, homotetramer.

The catalysed reaction is UTP + L-glutamine + ATP + H2O = CTP + L-glutamate + ADP + phosphate + 2 H(+). It carries out the reaction L-glutamine + H2O = L-glutamate + NH4(+). The enzyme catalyses UTP + NH4(+) + ATP = CTP + ADP + phosphate + 2 H(+). It functions in the pathway pyrimidine metabolism; CTP biosynthesis via de novo pathway; CTP from UDP: step 2/2. Allosterically activated by GTP, when glutamine is the substrate; GTP has no effect on the reaction when ammonia is the substrate. The allosteric effector GTP functions by stabilizing the protein conformation that binds the tetrahedral intermediate(s) formed during glutamine hydrolysis. Inhibited by the product CTP, via allosteric rather than competitive inhibition. Functionally, catalyzes the ATP-dependent amination of UTP to CTP with either L-glutamine or ammonia as the source of nitrogen. Regulates intracellular CTP levels through interactions with the four ribonucleotide triphosphates. This is CTP synthase from Desulfotalea psychrophila (strain LSv54 / DSM 12343).